The following is a 467-amino-acid chain: Probable apyrase 2 (467 aa).

Topologically, residues 1–25 are cytoplasmic; that stretch reads MRRYSALPGGGARPDTLADRLHRYR. A helical; Signal-anchor for type II membrane protein membrane pass occupies residues 26–46; it reads GVLLVILAPLALVSLVLLLMP. Residues 47-467 lie on the Extracellular side of the membrane; it reads RSPASSSAAA…PLGSAIEVAS (421 aa). 70–80 contributes to the ATP binding site; that stretch reads VIFDAGSSGSR. Glutamate 192 functions as the Proton acceptor in the catalytic mechanism. 216 to 226 contacts ATP; it reads GVVDLGGGSVQ.

It belongs to the GDA1/CD39 NTPase family. The cofactor is Ca(2+).

The protein localises to the membrane. The enzyme catalyses a ribonucleoside 5'-triphosphate + 2 H2O = a ribonucleoside 5'-phosphate + 2 phosphate + 2 H(+). Catalyzes the hydrolysis of phosphoanhydride bonds of nucleoside tri- and di-phosphates. This Oryza sativa subsp. japonica (Rice) protein is Probable apyrase 2 (APY2).